Reading from the N-terminus, the 505-residue chain is Probable alpha-L-arabinofuranosidase C (505 aa).

Asparagine 152, asparagine 269, and asparagine 438 each carry an N-linked (GlcNAc...) asparagine glycan.

Belongs to the glycosyl hydrolase 51 family.

The protein localises to the secreted. It catalyses the reaction Hydrolysis of terminal non-reducing alpha-L-arabinofuranoside residues in alpha-L-arabinosides.. Its pathway is glycan metabolism; L-arabinan degradation. Alpha-L-arabinofuranosidase involved in the degradation of arabinoxylan, a major component of plant hemicellulose. Acts only on small linear 1,5-alpha-linked L-arabinofuranosyl oligosaccharides. The polypeptide is Probable alpha-L-arabinofuranosidase C (abfC) (Aspergillus clavatus (strain ATCC 1007 / CBS 513.65 / DSM 816 / NCTC 3887 / NRRL 1 / QM 1276 / 107)).